A 548-amino-acid chain; its full sequence is Glucose-6-phosphate isomerase (548 aa).

Residue Glu355 is the Proton donor of the active site. Active-site residues include His386 and Lys514.

It belongs to the GPI family.

The protein localises to the cytoplasm. It carries out the reaction alpha-D-glucose 6-phosphate = beta-D-fructose 6-phosphate. It functions in the pathway carbohydrate biosynthesis; gluconeogenesis. The protein operates within carbohydrate degradation; glycolysis; D-glyceraldehyde 3-phosphate and glycerone phosphate from D-glucose: step 2/4. Its function is as follows. Catalyzes the reversible isomerization of glucose-6-phosphate to fructose-6-phosphate. In Yersinia pestis (strain Pestoides F), this protein is Glucose-6-phosphate isomerase.